Reading from the N-terminus, the 156-residue chain is Small ribosomal subunit protein uS7 (156 aa).

Belongs to the universal ribosomal protein uS7 family. Part of the 30S ribosomal subunit. Contacts proteins S9 and S11.

One of the primary rRNA binding proteins, it binds directly to 16S rRNA where it nucleates assembly of the head domain of the 30S subunit. Is located at the subunit interface close to the decoding center, probably blocks exit of the E-site tRNA. The protein is Small ribosomal subunit protein uS7 of Azorhizobium caulinodans (strain ATCC 43989 / DSM 5975 / JCM 20966 / LMG 6465 / NBRC 14845 / NCIMB 13405 / ORS 571).